The following is a 439-amino-acid chain: Exosome complex component RRP45 (439 aa).

The ARE binding stretch occupies residues 1–268; that stretch reads MKETPLSNCE…AEITELILKA (268 aa). Residue Ser65 is modified to Phosphoserine. The residue at position 297 (Lys297) is an N6-acetyllysine; alternate. A Glycyl lysine isopeptide (Lys-Gly) (interchain with G-Cter in SUMO1); alternate cross-link involves residue Lys297. Lys297 participates in a covalent cross-link: Glycyl lysine isopeptide (Lys-Gly) (interchain with G-Cter in SUMO2); alternate. Phosphoserine occurs at positions 306, 325, 327, and 346. 2 disordered regions span residues 335–363 and 391–439; these read GTAQIGEGVENSWGDLEDSEKEDDEGGGD and LSDS…RAAN. The span at 349–361 shows a compositional bias: acidic residues; sequence DLEDSEKEDDEGG. 4 positions are modified to phosphoserine: Ser392, Ser394, Lys409, and Ile411. A Glycyl lysine isopeptide (Lys-Gly) (interchain with G-Cter in SUMO2) cross-link involves residue Lys419. The segment covering 425 to 439 has biased composition (basic residues); sequence SKKPVKRRKKKRAAN.

The protein belongs to the RNase PH family. As to quaternary structure, component of the RNA exosome core complex (Exo-9), composed of EXOSC1, EXOSC2, EXOSC3, EXOSC4, EXOSC5, EXOSC6, EXOSC7, EXOSC8 and EXOSC9; within the complex interacts with EXOSC3, EXOSC4, EXOSC5 and DIS3. The catalytically inactive RNA exosome core complex (Exo-9) associates with the catalytic subunit EXOSC10/RRP6. Exo-9 may associate with DIS3 to form the nucleolar exosome complex, or DIS3L to form the cytoplasmic exosome complex. Exo-9 is formed by a hexameric base ring consisting of the heterodimers EXOSC4-EXOSC9, EXOSC5-EXOSC8 and EXOSC6-EXOSC7, and a cap ring consisting of EXOSC1, EXOSC2 and EXOSC3. The RNA exosome complex associates with cofactors C1D/RRP47, MPHOSPH6/MPP6 and MTREX/MTR4. Interacts (via C-terminus region) with SETX (via N-terminus domain); the interaction enhances SETX sumoylation. Interacts with DIS3; the interaction is direct.

It localises to the cytoplasm. The protein resides in the nucleus. The protein localises to the nucleolus. It is found in the nucleoplasm. Non-catalytic component of the RNA exosome complex which has 3'-&gt;5' exoribonuclease activity and participates in a multitude of cellular RNA processing and degradation events. In the nucleus, the RNA exosome complex is involved in proper maturation of stable RNA species such as rRNA, snRNA and snoRNA, in the elimination of RNA processing by-products and non-coding 'pervasive' transcripts, such as antisense RNA species and promoter-upstream transcripts (PROMPTs), and of mRNAs with processing defects, thereby limiting or excluding their export to the cytoplasm. The RNA exosome may be involved in Ig class switch recombination (CSR) and/or Ig variable region somatic hypermutation (SHM) by targeting AICDA deamination activity to transcribed dsDNA substrates. In the cytoplasm, the RNA exosome complex is involved in general mRNA turnover and specifically degrades inherently unstable mRNAs containing AU-rich elements (AREs) within their 3' untranslated regions, and in RNA surveillance pathways, preventing translation of aberrant mRNAs. It seems to be involved in degradation of histone mRNA. The catalytic inactive RNA exosome core complex of 9 subunits (Exo-9) is proposed to play a pivotal role in the binding and presentation of RNA for ribonucleolysis, and to serve as a scaffold for the association with catalytic subunits and accessory proteins or complexes. EXOSC9 binds to ARE-containing RNAs. The polypeptide is Exosome complex component RRP45 (EXOSC9) (Homo sapiens (Human)).